The chain runs to 290 residues: MDKIIKSIAQSGAFRAYVLDSTETVALAQEKHNTLSSSTVALGRTLIANQILAANQKGDSKITVKVIGDSSFGHIISVADTKGHVKGYIQNTGVDIKKTATGEVLVGPFMGNGHFVTIIDYGTGNPYTSTTPLITGEIGEDFAYYLTESEQTPSAIGLNVLLDENDKVKVAGGFMVQVLPGASEEEIARYEKRLQEMPAISHLLASKNHVDALLEAIYGDEPYKRLSEEPLSFQCDCSRERFEAALMTLPKADLQAMIDEDKGAEIVCQFCGTKYQFNESDLEALINDKA.

2 disulfide bridges follow: Cys235–Cys237 and Cys268–Cys271.

This sequence belongs to the HSP33 family. Post-translationally, under oxidizing conditions two disulfide bonds are formed involving the reactive cysteines. Under reducing conditions zinc is bound to the reactive cysteines and the protein is inactive.

The protein localises to the cytoplasm. Its function is as follows. Redox regulated molecular chaperone. Protects both thermally unfolding and oxidatively damaged proteins from irreversible aggregation. Plays an important role in the bacterial defense system toward oxidative stress. This chain is 33 kDa chaperonin, found in Streptococcus pyogenes serotype M18 (strain MGAS8232).